The following is a 470-amino-acid chain: MSGPRTLFEKIWSTHVVCVPDDQPPILYIDRHYVHEVTSPQAFDGLRAAGRKVRRTDLTFATVDHNVPTTSPRLVIKDDVAARQIDALRTNCAAFGVPLFDLTSEEQGIVHVIGPELGLTLPGMTIVCGDSHTSTHGAFGAFAFGIGTSEVEHVLATQCLPQRKPKTMKIEVSGTLPEGVTAKDLALGIIGKLGTDGATGHVIEYCGTAIRALSMEARMTLCNMSIEGGARAGLIGPDEITFAYIRNRQYAPKGAEWDTGVAEWAALNTDEGAKFDREIHINAADLQPQVTWGTNPGMVVSVGANVPDPKATSDDAQRQSYERALTYMDLKPGTPVAQIAVDRVFIGSCTNSRIEDLRAAAKVVSGYHVAATVHAMVVPGSQRIKAKAEEEGLDRVFRDAGFEWRESGCSMCLGMNPDILSPGQRCASTSNRNFEGRQGRGGRTHLVSPAMAAAAAITGHFTDIREWEYK.

Residues cysteine 349, cysteine 409, and cysteine 412 each contribute to the [4Fe-4S] cluster site.

Belongs to the aconitase/IPM isomerase family. LeuC type 1 subfamily. In terms of assembly, heterodimer of LeuC and LeuD. The cofactor is [4Fe-4S] cluster.

It catalyses the reaction (2R,3S)-3-isopropylmalate = (2S)-2-isopropylmalate. It participates in amino-acid biosynthesis; L-leucine biosynthesis; L-leucine from 3-methyl-2-oxobutanoate: step 2/4. Functionally, catalyzes the isomerization between 2-isopropylmalate and 3-isopropylmalate, via the formation of 2-isopropylmaleate. In Koribacter versatilis (strain Ellin345), this protein is 3-isopropylmalate dehydratase large subunit.